The following is a 510-amino-acid chain: GMP synthase [glutamine-hydrolyzing] (510 aa).

Residues 5–195 (LVLVIDFGGQ…LFKICGLKED (191 aa)) enclose the Glutamine amidotransferase type-1 domain. Residue Cys-82 is the Nucleophile of the active site. Residues His-169 and Glu-171 contribute to the active site. In terms of domain architecture, GMPS ATP-PPase spans 196 to 385 (WSMSSFAKEK…LGIPHKLVWR (190 aa)). 223–229 (SGGVDSS) contributes to the ATP binding site.

Homodimer.

The enzyme catalyses XMP + L-glutamine + ATP + H2O = GMP + L-glutamate + AMP + diphosphate + 2 H(+). It functions in the pathway purine metabolism; GMP biosynthesis; GMP from XMP (L-Gln route): step 1/1. Functionally, catalyzes the synthesis of GMP from XMP. The polypeptide is GMP synthase [glutamine-hydrolyzing] (Clostridium acetobutylicum (strain ATCC 824 / DSM 792 / JCM 1419 / IAM 19013 / LMG 5710 / NBRC 13948 / NRRL B-527 / VKM B-1787 / 2291 / W)).